We begin with the raw amino-acid sequence, 76 residues long: Beta-defensin 121 (76 aa).

Positions M1–A15 are cleaved as a signal peptide. Intrachain disulfides connect C23–C50, C30–C44, and C34–C51.

This sequence belongs to the beta-defensin family. In terms of tissue distribution, abundant expression in the male reproductive tract only.

The protein resides in the secreted. Functionally, has antibacterial activity. The sequence is that of Beta-defensin 121 (DEFB121) from Homo sapiens (Human).